A 109-amino-acid polypeptide reads, in one-letter code: Prothymosin alpha (109 aa).

Residues 1-109 (MSDTSVDASV…AKKQKTDDDD (109 aa)) are disordered. Basic and acidic residues predominate over residues 9–35 (SVEKTTKDLKSKDKELVEETENGKDKP). The segment covering 41–81 (ENEENGEDGADNEEEEEVDEEDEEDEGEGDDDEGDEDDEAD) has biased composition (acidic residues). Over residues 99–109 (DAKKQKTDDDD) the composition is skewed to basic and acidic residues.

It belongs to the pro/parathymosin family. Highly expressed in the testis.

The protein localises to the nucleus. In terms of biological role, may have role in testicular activity. The protein is Prothymosin alpha of Pelophylax lessonae (Pool frog).